We begin with the raw amino-acid sequence, 205 residues long: UPF0637 protein OB1420 (205 aa).

This sequence belongs to the UPF0637 family.

In Oceanobacillus iheyensis (strain DSM 14371 / CIP 107618 / JCM 11309 / KCTC 3954 / HTE831), this protein is UPF0637 protein OB1420.